We begin with the raw amino-acid sequence, 378 residues long: tRNA-specific 2-thiouridylase MnmA (378 aa).

ATP contacts are provided by residues 9–16 (GVSGGVDS) and methionine 35. Positions 94 to 96 (NPD) are interaction with target base in tRNA. The Nucleophile role is filled by cysteine 99. Cysteines 99 and 195 form a disulfide. ATP is bound at residue glycine 123. The tract at residues 145-147 (KDQ) is interaction with tRNA. The active-site Cysteine persulfide intermediate is the cysteine 195. The interaction with tRNA stretch occupies residues 307-308 (RY).

The protein belongs to the MnmA/TRMU family.

It is found in the cytoplasm. The catalysed reaction is S-sulfanyl-L-cysteinyl-[protein] + uridine(34) in tRNA + AH2 + ATP = 2-thiouridine(34) in tRNA + L-cysteinyl-[protein] + A + AMP + diphosphate + H(+). Catalyzes the 2-thiolation of uridine at the wobble position (U34) of tRNA, leading to the formation of s(2)U34. The sequence is that of tRNA-specific 2-thiouridylase MnmA from Xanthomonas oryzae pv. oryzae (strain MAFF 311018).